Reading from the N-terminus, the 136-residue chain is Ribosome-binding factor A (136 aa).

The disordered stretch occupies residues Met1–Gln22.

It belongs to the RbfA family. In terms of assembly, monomer. Binds 30S ribosomal subunits, but not 50S ribosomal subunits or 70S ribosomes.

The protein resides in the cytoplasm. In terms of biological role, one of several proteins that assist in the late maturation steps of the functional core of the 30S ribosomal subunit. Associates with free 30S ribosomal subunits (but not with 30S subunits that are part of 70S ribosomes or polysomes). Required for efficient processing of 16S rRNA. May interact with the 5'-terminal helix region of 16S rRNA. In Gluconacetobacter diazotrophicus (strain ATCC 49037 / DSM 5601 / CCUG 37298 / CIP 103539 / LMG 7603 / PAl5), this protein is Ribosome-binding factor A.